The sequence spans 880 residues: Translation initiation factor IF-2 (880 aa).

A disordered region spans residues 1–251; it reads MVDTKNPGDK…PTAKPAPAKQ (251 aa). Low complexity predominate over residues 58 to 79; the sequence is PADAPAAPAPVAAAKPAPVRAP. Residues 115 to 183 are compositionally biased toward basic and acidic residues; that stretch reads ARIRDEEERK…KRFGEEEAKK (69 aa). Composition is skewed to low complexity over residues 184–215 and 233–250; these read AAAA…VAAD and AARP…APAK. Residues 376–547 enclose the tr-type G domain; that stretch reads PRSPVVTVMG…ALQAELLDLK (172 aa). Positions 385-392 are G1; that stretch reads GHVDHGKT. A GTP-binding site is contributed by 385–392; the sequence is GHVDHGKT. The interval 410 to 414 is G2; sequence GITQH. Residues 433 to 436 form a G3 region; it reads DTPG. Residues 433–437 and 487–490 each bind GTP; these read DTPGH and NKID. The segment at 487-490 is G4; it reads NKID. The segment at 523-525 is G5; the sequence is SAK.

It belongs to the TRAFAC class translation factor GTPase superfamily. Classic translation factor GTPase family. IF-2 subfamily.

It is found in the cytoplasm. Functionally, one of the essential components for the initiation of protein synthesis. Protects formylmethionyl-tRNA from spontaneous hydrolysis and promotes its binding to the 30S ribosomal subunits. Also involved in the hydrolysis of GTP during the formation of the 70S ribosomal complex. The chain is Translation initiation factor IF-2 from Rhodopseudomonas palustris (strain BisB18).